The following is a 71-amino-acid chain: uncharacterized protein (71 aa).

Residues 5–22 (VVMCSGLFCSVFAGAFML) form a helical membrane-spanning segment.

It is found in the membrane. This is an uncharacterized protein from Bacillus subtilis (strain 168).